The chain runs to 388 residues: 8-amino-7-oxononanoate synthase (388 aa).

Arg23 is a substrate binding site. 110-111 is a pyridoxal 5'-phosphate binding site; sequence GF. Substrate is bound at residue His135. Pyridoxal 5'-phosphate is bound by residues Ser181, His209, and Thr235. Lys238 bears the N6-(pyridoxal phosphate)lysine mark. A substrate-binding site is contributed by Thr352.

The protein belongs to the class-II pyridoxal-phosphate-dependent aminotransferase family. BioF subfamily. Homodimer. Requires pyridoxal 5'-phosphate as cofactor.

It carries out the reaction 6-carboxyhexanoyl-[ACP] + L-alanine + H(+) = (8S)-8-amino-7-oxononanoate + holo-[ACP] + CO2. It functions in the pathway cofactor biosynthesis; biotin biosynthesis. In terms of biological role, catalyzes the decarboxylative condensation of pimeloyl-[acyl-carrier protein] and L-alanine to produce 8-amino-7-oxononanoate (AON), [acyl-carrier protein], and carbon dioxide. This is 8-amino-7-oxononanoate synthase from Sodalis glossinidius (strain morsitans).